Consider the following 387-residue polypeptide: MGPLFTTIPGAHSGPMRPLPKKHVEPMAVRQLLLGNATMIRHTCPMSVPLSRQVKEVAAQKPSEDIYKNWRRQQQQQQQQQQQQQQQQLDLLFHQRIQISLWPRKQKRRKTEQHSHSFVKKAFRFSASPGCGRPSSNKMLRSMGGGQRPTGLGSEFFRLLHDLHLLAFPTKCIWIHRRGEATARPRAPEHPAPPATAVRGRDAASQNLKRRPGSGTDGLRLQGAEPSRLLRTYAGGAVIPTGTPERAQPPPPQDLLGRRRWLSRNTWGPWPGTTQPPSPQLLRNDWGSCGFMVPEAARGKVFQDSQEGAHIRRETVSKSVCAEPWRHQRARDPAPTNFPLKCQKQRGASTSSGQHGGRVNLVFFIDSPTVIAVPDLQCPTKYSGILY.

Disordered stretches follow at residues 1–21, 182–226, and 329–353; these read MGPL…PLPK, TARP…GAEP, and RARD…TSSG.

This sequence belongs to the FAM157 family.

The polypeptide is Putative protein FAM157C (FAM157C) (Homo sapiens (Human)).